A 321-amino-acid chain; its full sequence is Lipoyl synthase (321 aa).

[4Fe-4S] cluster is bound by residues C68, C73, C79, C94, C98, C101, and S308. Residues 80–297 (FNHGTATFMI…KEIALELGFT (218 aa)) enclose the Radical SAM core domain.

The protein belongs to the radical SAM superfamily. Lipoyl synthase family. The cofactor is [4Fe-4S] cluster.

Its subcellular location is the cytoplasm. It carries out the reaction [[Fe-S] cluster scaffold protein carrying a second [4Fe-4S](2+) cluster] + N(6)-octanoyl-L-lysyl-[protein] + 2 oxidized [2Fe-2S]-[ferredoxin] + 2 S-adenosyl-L-methionine + 4 H(+) = [[Fe-S] cluster scaffold protein] + N(6)-[(R)-dihydrolipoyl]-L-lysyl-[protein] + 4 Fe(3+) + 2 hydrogen sulfide + 2 5'-deoxyadenosine + 2 L-methionine + 2 reduced [2Fe-2S]-[ferredoxin]. Its pathway is protein modification; protein lipoylation via endogenous pathway; protein N(6)-(lipoyl)lysine from octanoyl-[acyl-carrier-protein]: step 2/2. Its function is as follows. Catalyzes the radical-mediated insertion of two sulfur atoms into the C-6 and C-8 positions of the octanoyl moiety bound to the lipoyl domains of lipoate-dependent enzymes, thereby converting the octanoylated domains into lipoylated derivatives. This is Lipoyl synthase from Vibrio campbellii (strain ATCC BAA-1116).